The following is a 292-amino-acid chain: Small ribosomal subunit protein uS2 (292 aa).

Residues 230–292 (RSGGAPGSEK…KKEAGSGEEA (63 aa)) are disordered. 2 stretches are compositionally biased toward basic and acidic residues: residues 247–259 (EWER…KTEA) and 271–292 (PAKE…GEEA).

The protein belongs to the universal ribosomal protein uS2 family.

This chain is Small ribosomal subunit protein uS2, found in Thermobifida fusca (strain YX).